The chain runs to 1420 residues: DNA-directed RNA polymerase subunit beta' (1420 aa).

Positions 71, 73, 86, and 89 each coordinate Zn(2+). Mg(2+) is bound by residues D461, D463, and D465. Zn(2+) is bound by residues C815, C889, C896, and C899.

Belongs to the RNA polymerase beta' chain family. The RNAP catalytic core consists of 2 alpha, 1 beta, 1 beta' and 1 omega subunit. When a sigma factor is associated with the core the holoenzyme is formed, which can initiate transcription. It depends on Mg(2+) as a cofactor. Zn(2+) is required as a cofactor.

It carries out the reaction RNA(n) + a ribonucleoside 5'-triphosphate = RNA(n+1) + diphosphate. Its function is as follows. DNA-dependent RNA polymerase catalyzes the transcription of DNA into RNA using the four ribonucleoside triphosphates as substrates. The protein is DNA-directed RNA polymerase subunit beta' of Histophilus somni (strain 129Pt) (Haemophilus somnus).